Consider the following 428-residue polypeptide: Serine--tRNA ligase (428 aa).

An L-serine-binding site is contributed by 235–237 (TAE). 266-268 (RSE) contributes to the ATP binding site. Residue Glu289 coordinates L-serine. 353–356 (EISS) is a binding site for ATP. An L-serine-binding site is contributed by Ser389.

This sequence belongs to the class-II aminoacyl-tRNA synthetase family. Type-1 seryl-tRNA synthetase subfamily. In terms of assembly, homodimer. The tRNA molecule binds across the dimer.

The protein resides in the cytoplasm. It carries out the reaction tRNA(Ser) + L-serine + ATP = L-seryl-tRNA(Ser) + AMP + diphosphate + H(+). The enzyme catalyses tRNA(Sec) + L-serine + ATP = L-seryl-tRNA(Sec) + AMP + diphosphate + H(+). It participates in aminoacyl-tRNA biosynthesis; selenocysteinyl-tRNA(Sec) biosynthesis; L-seryl-tRNA(Sec) from L-serine and tRNA(Sec): step 1/1. Catalyzes the attachment of serine to tRNA(Ser). Is also able to aminoacylate tRNA(Sec) with serine, to form the misacylated tRNA L-seryl-tRNA(Sec), which will be further converted into selenocysteinyl-tRNA(Sec). This is Serine--tRNA ligase from Shewanella frigidimarina (strain NCIMB 400).